The following is a 984-amino-acid chain: Mediator of RNA polymerase II transcription subunit 5 (984 aa).

Belongs to the Mediator complex subunit 5 family. Component of the Mediator complex.

The protein localises to the nucleus. Component of the Mediator complex, a coactivator involved in the regulated transcription of nearly all RNA polymerase II-dependent genes. Mediator functions as a bridge to convey information from gene-specific regulatory proteins to the basal RNA polymerase II transcription machinery. Mediator is recruited to promoters by direct interactions with regulatory proteins and serves as a scaffold for the assembly of a functional preinitiation complex with RNA polymerase II and the general transcription factors. In Phaeosphaeria nodorum (strain SN15 / ATCC MYA-4574 / FGSC 10173) (Glume blotch fungus), this protein is Mediator of RNA polymerase II transcription subunit 5 (NUT1).